Here is a 33-residue protein sequence, read N- to C-terminus: MIELLLFGIILGLISCVLAGLFVSAYYQYKRNR.

A helical membrane pass occupies residues 5-25 (LLFGIILGLISCVLAGLFVSA).

The protein belongs to the PetG family. In terms of assembly, the 4 large subunits of the cytochrome b6-f complex are cytochrome b6, subunit IV (17 kDa polypeptide, PetD), cytochrome f and the Rieske protein, while the 4 small subunits are PetG, PetL, PetM and PetN. The complex functions as a dimer.

It is found in the plastid. The protein resides in the chloroplast thylakoid membrane. In terms of biological role, component of the cytochrome b6-f complex, which mediates electron transfer between photosystem II (PSII) and photosystem I (PSI), cyclic electron flow around PSI, and state transitions. PetG is required for either the stability or assembly of the cytochrome b6-f complex. The protein is Cytochrome b6-f complex subunit 5 of Bigelowiella natans (Pedinomonas minutissima).